Reading from the N-terminus, the 348-residue chain is Alcohol dehydrogenase 1 (348 aa).

Residue Ser-2 is modified to N-acetylserine. Cys-44 contributes to the Zn(2+) binding site. 3 residues coordinate NAD(+): His-45, Thr-46, and His-49. Zn(2+) contacts are provided by His-67, Glu-68, Cys-98, Cys-101, Cys-104, Cys-112, and Cys-154. NAD(+) is bound by residues Gly-181, Gly-182, Leu-183, Asp-202, and Lys-207. Ser-213 is subject to Phosphoserine. Phe-222 lines the NAD(+) pocket. At Thr-223 the chain carries Phosphothreonine. Glycyl lysine isopeptide (Lys-Gly) (interchain with G-Cter in ubiquitin) cross-links involve residues Lys-226 and Lys-234. Val-269 and Met-271 together coordinate NAD(+). A Phosphoserine modification is found at Ser-279. Lys-287 participates in a covalent cross-link: Glycyl lysine isopeptide (Lys-Gly) (interchain with G-Cter in ubiquitin). Ser-294 and Val-296 together coordinate NAD(+). The residue at position 316 (Ser-316) is a Phosphoserine. Residue Lys-319 forms a Glycyl lysine isopeptide (Lys-Gly) (interchain with G-Cter in ubiquitin) linkage. Arg-341 is a binding site for NAD(+).

The protein belongs to the zinc-containing alcohol dehydrogenase family. As to quaternary structure, homotetramer. Zn(2+) is required as a cofactor.

The protein resides in the cytoplasm. The catalysed reaction is a primary alcohol + NAD(+) = an aldehyde + NADH + H(+). It catalyses the reaction a secondary alcohol + NAD(+) = a ketone + NADH + H(+). It carries out the reaction ethanol + NAD(+) = acetaldehyde + NADH + H(+). The enzyme catalyses allyl alcohol + NADP(+) = acrolein + NADPH + H(+). The catalysed reaction is 1-propanol + NAD(+) = propanal + NADH + H(+). It catalyses the reaction butan-1-ol + NAD(+) = butanal + NADH + H(+). It carries out the reaction hexan-1-ol + NAD(+) = hexanal + NADH + H(+). The enzyme catalyses (R)-lactaldehyde + NAD(+) = methylglyoxal + NADH + H(+). The catalysed reaction is octan-1-ol + NAD(+) = octanal + NADH + H(+). It catalyses the reaction butan-2-ol + NAD(+) = butan-2-one + NADH + H(+). It carries out the reaction propan-2-ol + NAD(+) = acetone + NADH + H(+). The enzyme catalyses isobutanol + NAD(+) = 2-methylpropanal + NADH + H(+). In terms of biological role, preferentially fermentative isozyme that reduces acetaldehyde to ethanol during the fermentation of glucose. Major enzyme required for the conversion of acetaldehyde to ethanol. Plays a key role in the carbohydrate metabolism through the regeneration of NAD(+) from glycolytic NADH. In the reverse reaction, preferentially catalyzes the conversion of primary unbranched alcohols to their corresponding aldehydes. Also shows activity toward secondary alcohols. Most active with ethanol, and its activity decreases as the size of the alcohol is increased. The sequence is that of Alcohol dehydrogenase 1 (ADH1) from Saccharomyces cerevisiae (strain ATCC 204508 / S288c) (Baker's yeast).